The following is a 174-amino-acid chain: Dual-action ribosomal maturation protein DarP (174 aa).

This sequence belongs to the DarP family.

The protein localises to the cytoplasm. In terms of biological role, member of a network of 50S ribosomal subunit biogenesis factors which assembles along the 30S-50S interface, preventing incorrect 23S rRNA structures from forming. Promotes peptidyl transferase center (PTC) maturation. The polypeptide is Dual-action ribosomal maturation protein DarP (Pseudomonas paraeruginosa (strain DSM 24068 / PA7) (Pseudomonas aeruginosa (strain PA7))).